A 1168-amino-acid chain; its full sequence is MLEGPILAVSRQTSLTSGIPGATKRYSFAKIKEPIEVPGLLDLQRDSFAWLIGAPEWRAKKQAESEEGARITSGLEDILEELSPIEDYSGNMSLTLSEPRFDDVKNTIDEAKDKDINYSAPLYVTAEFTNAMSGEIKSQTVFIGDFPMMTDKGTFIINGTERVIVSQLVRSPGVYFDESIDKSTERPLHSVKVIPSRGAWLEFDIDKRDTVGVRIDRKRRQPVTVLLKALGLSTQDITDRFGFSELMMSTLEHDGVANTDEALLEIYRKQRPGESPTRDSAQALLDNSFFNPKRYDLAKVGRYKVNRKLGLGGGSTTGEHTLTEEDILTTIEYLVRLHAGERTMESPDGTELMIATDDIDHFGNRRLRTVGELVQNQVRVGLSRMERVVRERMTTQDAESITPTSLINVRPVSAAIREFFGTSQLSQFMDQNNSLSGLTHKRRLSALGPGGLSRERAGLDVRDVHASHYGRMCPIETPEGPNIGLIGSLASYARVNPFGFIETPYRRVENGQATDVVDYLTADEEDRHIVAQANTKMDSEGRFVEDTVEVRMKGGNVEVVPASEVDYMDVSPRQMVSVATAMIPFLEHDDANRALMGANMQRQAVPLLRNEAPFVGTGMELRAAHDAGDVVIARRSGVVETVCADFITTLGDDGQRDTFLLRKFERTNQGTCYNQKPLVEAGDRIEEGQALADGPGTENGEMALGRNLLVAFMPWEGHNYEDAIILNQRIVEEDVLTSIHIEEHEIDARDTKLGPEEITRDIPNASEDILADLDERGIVRIGADVRDGDILVGKVTPKGETELTPEERLLRAIFGEKAREVRDTSMKVPHGETGKVIGVRVFSREDDDDLAPGVNQMVRVYVAQKRKIQDGDKLSGRHGNKGVVGKILPAEDMPFLPDGTPVDVILNTHGVPRRMNIGQVLELHLGMLAKSGWKVDPESQDPAIKAMLETLPEDLYDVPADSRVATPVFDGTTNEELSGLMRSSRPNRDGDQMVNEFGKSTLIDGRTGEPFQQPISVGYMYMLKLHHLVDEKIHARSTGPYSMITQQPLGGKAQFGGQRFGEMEVWAMQAYGAAYTLQELLTIKSDDVVGRVKVYEAIVKGDNIPDPGIPESFKVLLKELQSLCLNVEVLSADGTPVDLGADDDDLDQANASLGINLSRDERFDADAV.

This sequence belongs to the RNA polymerase beta chain family. In terms of assembly, the RNAP catalytic core consists of 2 alpha, 1 beta, 1 beta' and 1 omega subunit. When a sigma factor is associated with the core the holoenzyme is formed, which can initiate transcription.

It carries out the reaction RNA(n) + a ribonucleoside 5'-triphosphate = RNA(n+1) + diphosphate. Its function is as follows. DNA-dependent RNA polymerase catalyzes the transcription of DNA into RNA using the four ribonucleoside triphosphates as substrates. This chain is DNA-directed RNA polymerase subunit beta, found in Corynebacterium kroppenstedtii (strain DSM 44385 / JCM 11950 / CIP 105744 / CCUG 35717).